The sequence spans 326 residues: Ribonuclease H2 subunit A (326 aa).

Residues 1-47 (MKDDHDAWEPEELVSDNNSSENELQEDQNSSITFLPPSVNKSNPAKS) are disordered. Residues 15 to 47 (SDNNSSENELQEDQNSSITFLPPSVNKSNPAKS) are compositionally biased toward polar residues. Positions 63-286 (PYRLGVDEAG…AKDLLELPSK (224 aa)) constitute an RNase H type-2 domain. Positions 69, 70, and 180 each coordinate a divalent metal cation.

It belongs to the RNase HII family. Eukaryotic subfamily. Mn(2+) is required as a cofactor. The cofactor is Mg(2+).

It carries out the reaction Endonucleolytic cleavage to 5'-phosphomonoester.. Endonuclease that specifically degrades the RNA of RNA-DNA hybrids. Participates in DNA replication. The chain is Ribonuclease H2 subunit A (rnh201) from Schizosaccharomyces pombe (strain 972 / ATCC 24843) (Fission yeast).